The primary structure comprises 248 residues: 3-deoxy-manno-octulosonate cytidylyltransferase (248 aa).

Belongs to the KdsB family.

It is found in the cytoplasm. It carries out the reaction 3-deoxy-alpha-D-manno-oct-2-ulosonate + CTP = CMP-3-deoxy-beta-D-manno-octulosonate + diphosphate. It functions in the pathway nucleotide-sugar biosynthesis; CMP-3-deoxy-D-manno-octulosonate biosynthesis; CMP-3-deoxy-D-manno-octulosonate from 3-deoxy-D-manno-octulosonate and CTP: step 1/1. Its pathway is bacterial outer membrane biogenesis; lipopolysaccharide biosynthesis. In terms of biological role, activates KDO (a required 8-carbon sugar) for incorporation into bacterial lipopolysaccharide in Gram-negative bacteria. This is 3-deoxy-manno-octulosonate cytidylyltransferase from Desulfosudis oleivorans (strain DSM 6200 / JCM 39069 / Hxd3) (Desulfococcus oleovorans).